The primary structure comprises 343 residues: 4-hydroxy-2-oxovalerate aldolase (343 aa).

Positions 4 to 254 constitute a Pyruvate carboxyltransferase domain; the sequence is PRLTDTTLRD…NPGLDVFSLM (251 aa). Residue 12-13 participates in substrate binding; sequence RD. Aspartate 13 serves as a coordination point for Mn(2+). Histidine 16 serves as the catalytic Proton acceptor. 2 residues coordinate substrate: serine 166 and histidine 193. Residues histidine 193 and histidine 195 each coordinate Mn(2+). Residue tyrosine 284 participates in substrate binding.

It belongs to the 4-hydroxy-2-oxovalerate aldolase family.

It carries out the reaction (S)-4-hydroxy-2-oxopentanoate = acetaldehyde + pyruvate. This is 4-hydroxy-2-oxovalerate aldolase from Chloroflexus aurantiacus (strain ATCC 29364 / DSM 637 / Y-400-fl).